Reading from the N-terminus, the 1571-residue chain is Neurexin-3 (1571 aa).

The N-terminal stretch at 1-27 (MSFTLHSVFFTLKVSIFLGSLVGLCLG) is a signal peptide. The 175-residue stretch at 28 to 202 (LEFMGLPNQW…SVQLEAEGPC (175 aa)) folds into the Laminin G-like 1 domain. The Extracellular portion of the chain corresponds to 28–1496 (LEFMGLPNQW…EVIRESSSTT (1469 aa)). 2 N-linked (GlcNAc...) asparagine glycosylation sites follow: Asn-58 and Asn-105. An EGF-like 1 domain is found at 198–235 (AEGPCGERPCENGGICFLLDGHPTCDCSTTGYGGTLCS). Intrachain disulfides connect Cys-202–Cys-213, Cys-207–Cys-222, and Cys-224–Cys-234. 2 Laminin G-like domains span residues 258 to 440 (VATF…VFKC) and 447 to 639 (DPIN…KSSC). 3 residues coordinate Ca(2+): Asp-304, Leu-321, and Met-374. Cystine bridges form between Cys-404-Cys-440, Cys-610-Cys-639, Cys-647-Cys-658, Cys-652-Cys-667, and Cys-669-Cys-679. In terms of domain architecture, EGF-like 2 spans 643–680 (SAKQCDSYPCKNNAVCKDGWNRFICDCTGTGYWGRTCE). Laminin G-like domains lie at 685–857 (ILSY…IDYC) and 871–1046 (DPVT…ERGC). 2 residues coordinate Ca(2+): Asp-732 and Leu-749. Asn-757 carries an N-linked (GlcNAc...) asparagine glycan. Arg-807 contacts Ca(2+). Intrachain disulfides connect Cys-1018–Cys-1046, Cys-1053–Cys-1064, Cys-1058–Cys-1073, and Cys-1075–Cys-1085. Residues 1049 to 1086 (PSTTCQEDSCANQGVCMQQWEGFTCDCSMTSYSGNQCN) enclose the EGF-like 3 domain. A Laminin G-like 6 domain is found at 1090 to 1290 (ATYIFGKSGG…NPNIKINGSV (201 aa)). Asp-1142 and Ile-1159 together coordinate Ca(2+). Asn-1189 carries an N-linked (GlcNAc...) asparagine glycan. Positions 1241 and 1243 each coordinate Ca(2+). N-linked (GlcNAc...) asparagine glycosylation is found at Asn-1287 and Asn-1331. The segment at 1324-1348 (ATTTTRKNRSTASIQPTSDDLVSSA) is disordered. A compositionally biased stretch (polar residues) spans 1333–1348 (STASIQPTSDDLVSSA). An O-linked (Xyl...) (heparan sulfate) serine glycan is attached at Ser-1347. Residues 1497–1517 (GMVVGIVAAAALCILILLYAM) form a helical membrane-spanning segment. At 1518-1571 (YKYRNRDEGSYQVDETRNYISNSAQSNGTLMKEKQASSKSGHKKQKNKDKEYYV) the chain is on the cytoplasmic side. The interval 1539 to 1571 (NSAQSNGTLMKEKQASSKSGHKKQKNKDKEYYV) is disordered.

It belongs to the neurexin family. As to quaternary structure, the laminin G-like domain 2 binds to NXPH1. Specific isoforms bind to alpha-dystroglycan. The cytoplasmic C-terminal region binds to CASK. Specific isoforms bind neuroligins NLGN1, NLGN2 and NLGN3. Interacts with CLSTN3. Post-translationally, O-glycosylated; contains heparan sulfate. Heparan sulfate attachment is required for synapse development by mediating interactions with neuroligins. As to expression, brain and arteries (at protein level).

It is found in the presynaptic cell membrane. Its function is as follows. Neuronal cell surface protein that may be involved in cell recognition and cell adhesion. May mediate intracellular signaling. The polypeptide is Neurexin-3 (Nrxn3) (Mus musculus (Mouse)).